The sequence spans 142 residues: Hemoglobin subunit alpha 1 (142 aa).

At S1 the chain carries N-acetylserine. A Globin domain is found at 1-142 (SLSDKDKAAV…VSLALSERYR (142 aa)). H59 contributes to the O2 binding site. H88 is a binding site for heme b.

This sequence belongs to the globin family. As to quaternary structure, hb1 is a heterotetramer of two alpha-1 chains and two beta-1 chains. Hb2 is a heterotetramer of two alpha-2 chains and two beta-1 chains. HbC is a heterotetramer of two alpha-1 chains and two beta-2 chains. As to expression, red blood cells.

In terms of biological role, involved in oxygen transport from gills to the various peripheral tissues. This chain is Hemoglobin subunit alpha 1, found in Eleginops maclovinus (Patagonian blennie).